The chain runs to 389 residues: GDP-fucose protein O-fucosyltransferase 1 (389 aa).

A signal peptide spans 1–21 (MRVSKVLTLASFISVCSYSEA). N24 carries an N-linked (GlcNAc...) asparagine glycan. A disulfide bridge links C35 with C37. A substrate-binding site is contributed by 40-43 (RFGN). A disulfide bridge links C119 with C135. 238–240 (HLR) is a substrate binding site. 2 disulfides stabilise this stretch: C249–C281 and C266–C353. 356-357 (TF) is a substrate binding site.

The protein belongs to the glycosyltransferase 65 family. As to quaternary structure, monomer.

The protein resides in the endoplasmic reticulum. It carries out the reaction L-seryl-[protein] + GDP-beta-L-fucose = 3-O-(alpha-L-fucosyl)-L-seryl-[protein] + GDP + H(+). The enzyme catalyses L-threonyl-[protein] + GDP-beta-L-fucose = 3-O-(alpha-L-fucosyl)-L-threonyl-[protein] + GDP + H(+). It functions in the pathway protein modification; protein glycosylation. Its function is as follows. Catalyzes the reaction that attaches fucose through an O-glycosidic linkage to a conserved serine or threonine residue found in the consensus sequence C2-X(4,5)-[S/T]-C3 of EGF domains, where C2 and C3 are the second and third conserved cysteines. Specifically uses GDP-fucose as donor substrate and proper disulfide pairing of the substrate EGF domains is required for fucose transfer. This is GDP-fucose protein O-fucosyltransferase 1 from Caenorhabditis elegans.